Here is a 436-residue protein sequence, read N- to C-terminus: Trigger factor (436 aa).

The region spanning 161–246 (DDQLNIDFVG…VNSVSEPKLP (86 aa)) is the PPIase FKBP-type domain.

This sequence belongs to the FKBP-type PPIase family. Tig subfamily.

It is found in the cytoplasm. The enzyme catalyses [protein]-peptidylproline (omega=180) = [protein]-peptidylproline (omega=0). Involved in protein export. Acts as a chaperone by maintaining the newly synthesized protein in an open conformation. Functions as a peptidyl-prolyl cis-trans isomerase. This chain is Trigger factor, found in Pseudomonas fluorescens (strain ATCC BAA-477 / NRRL B-23932 / Pf-5).